A 367-amino-acid polypeptide reads, in one-letter code: Female-specific protein transformer (367 aa).

The interval 86-280 is disordered; the sequence is ESISSKKIKS…HRHHRSQERS (195 aa). A compositionally biased stretch (polar residues) spans 109-129; it reads VKQNSPDVTQKFTKKYGSSEN. A compositionally biased stretch (basic and acidic residues) spans 130 to 144; that stretch reads PDFRRHSSYEKDNYH. The span at 195–223 shows a compositional bias: basic residues; sequence NRRRSSHRSRRGSGSPRSRRYTSRHRRRS. Residues 229–238 show a composition bias toward basic and acidic residues; that stretch reads TSWKHNPEHR. Residues 239-257 show a composition bias toward basic residues; the sequence is TSRRSRTRSPRGNRSRRRS.

In terms of biological role, sex differentiation protein controlling female somatic sexual differentiation. May act by promoting the formation of a splicing enhancer complex. The sequence is that of Female-specific protein transformer from Musca domestica (House fly).